The sequence spans 178 residues: Caveolin-1 (178 aa).

Serine 2 carries the N-acetylserine modification. Serine 2 carries the post-translational modification Phosphoserine. Positions 2–94 are required for homooligomerization; sequence SGGKYVDSEG…WKASFTTFTV (93 aa). The Cytoplasmic portion of the chain corresponds to 2-104; the sequence is SGGKYVDSEG…TKYWFYRLLS (103 aa). Lysine 5 bears the N6-acetyllysine; alternate mark. Lysine 5 participates in a covalent cross-link: Glycyl lysine isopeptide (Lys-Gly) (interchain with G-Cter in ubiquitin); alternate. The residue at position 6 (tyrosine 6) is a Phosphotyrosine. Residue serine 9 is modified to Phosphoserine. Tyrosine 14 carries the phosphotyrosine; by ABL1 modification. Tyrosine 25 is subject to Phosphotyrosine. Residues lysine 26, lysine 30, lysine 39, lysine 47, and lysine 57 each participate in a glycyl lysine isopeptide (Lys-Gly) (interchain with G-Cter in ubiquitin) cross-link. The segment at 82-94 is interaction with CAVIN3; the sequence is DGIWKASFTTFTV. Positions 105–125 form an intramembrane region, helical; the sequence is TLFGIPMALIWGIYFAILSFL. Topologically, residues 126 to 178 are cytoplasmic; it reads HIWAVVPCIKSFLIEIQCIGRVYSIYIHTFCDPLFEAVGKLFSNIRINMQKEI. An interacts with SPRY1, SPRY2, SPRY3 and SPRY4 region spans residues 131-142; the sequence is VPCIKSFLIEIQ. Residues cysteine 133, cysteine 143, and cysteine 156 are each lipidated (S-palmitoyl cysteine). An interacts with SPRY1, SPRY2, and SPRY4 region spans residues 149–160; sequence SIYIHTFCDPLF. The tract at residues 167–178 is interacts with SPRY1, SPRY2, SPRY3 and SPRY4; the sequence is FSNIRINMQKEI.

It belongs to the caveolin family. Homooligomer. Interacts with GLIPR2. Interacts with NOSTRIN. Interacts with SNAP25 and STX1A. Interacts (via the N-terminus) with DPP4; the interaction is direct. Interacts with CTNNB1, CDH1 and JUP. Interacts with PACSIN2; this interaction induces membrane tubulation. Interacts with SLC7A9. Interacts with BMX and BTK. Interacts with TGFBR1. Interacts with CAVIN3 (via leucine-zipper domain) in a cholesterol-sensitive manner. Interacts with CAVIN1. Interacts with EHD2 in a cholesterol-dependent manner. Forms a ternary complex with UBXN6 and VCP; mediates CAV1 targeting to lysosomes for degradation. Interacts with ABCG1; this interaction regulates ABCG1-mediated cholesterol efflux. Interacts with NEU3; this interaction enhances NEU3 sialidase activity within caveola. Interacts (via C-terminus) with SPRY1, SPRY2 (via C-terminus), SPRY3, and SPRY4. Interacts with IGFBP5; this interaction allows trafficking of IGFBP5 from the plasma membrane to the nucleus. Phosphorylated at Tyr-14 by ABL1 in response to oxidative stress. Post-translationally, ubiquitinated. Undergo monoubiquitination and multi- and/or polyubiquitination. Monoubiquitination of N-terminal lysines promotes integration in a ternary complex with UBXN6 and VCP which promotes oligomeric CAV1 targeting to lysosomes for degradation. Ubiquitinated by ZNRF1; leading to degradation and modulation of the TLR4-mediated immune response.

The protein resides in the golgi apparatus membrane. It is found in the cell membrane. It localises to the membrane. Its subcellular location is the caveola. The protein localises to the membrane raft. Functionally, may act as a scaffolding protein within caveolar membranes. Forms a stable heterooligomeric complex with CAV2 that targets to lipid rafts and drives caveolae formation. Mediates the recruitment of CAVIN proteins (CAVIN1/2/3/4) to the caveolae. Interacts directly with G-protein alpha subunits and can functionally regulate their activity. Involved in the costimulatory signal essential for T-cell receptor (TCR)-mediated T-cell activation. Its binding to DPP4 induces T-cell proliferation and NF-kappa-B activation in a T-cell receptor/CD3-dependent manner. Recruits CTNNB1 to caveolar membranes and may regulate CTNNB1-mediated signaling through the Wnt pathway. Negatively regulates TGFB1-mediated activation of SMAD2/3 by mediating the internalization of TGFBR1 from membrane rafts leading to its subsequent degradation. Binds 20(S)-hydroxycholesterol (20(S)-OHC). The protein is Caveolin-1 (CAV1) of Dasypus novemcinctus (Nine-banded armadillo).